The following is a 503-amino-acid chain: Galactose/methyl galactoside import ATP-binding protein MglA 2 (503 aa).

ABC transporter domains follow at residues 11-246 (LEMT…VGRE) and 257-503 (TPKE…SRYL). 43–50 (GENGAGKS) contributes to the ATP binding site.

This sequence belongs to the ABC transporter superfamily. Galactose/methyl galactoside importer (TC 3.A.1.2.3) family. As to quaternary structure, the complex is composed of one ATP-binding protein (MglA), two transmembrane proteins (MglC) and a solute-binding protein (MglB).

The protein localises to the cell inner membrane. The catalysed reaction is D-galactose(out) + ATP + H2O = D-galactose(in) + ADP + phosphate + H(+). The enzyme catalyses methyl beta-D-galactoside(out) + ATP + H2O = methyl beta-D-galactoside(in) + ADP + phosphate + H(+). Functionally, part of the ABC transporter complex MglABC involved in galactose/methyl galactoside import. Responsible for energy coupling to the transport system. This Photobacterium profundum (strain SS9) protein is Galactose/methyl galactoside import ATP-binding protein MglA 2.